Here is a 654-residue protein sequence, read N- to C-terminus: MGNGIGKLSKCLTGGAGRNKKPELSILEPDPLDEGLGHSFCYVRPDPTRVSSSKVHSEEETTTFRTISGASVSANTATPLSTSLYDPYGHIDRAAAFESTTSFSSIPLQPIPRSSGPIVPGSGPLERGFLSGPIERGFMSGPLDGSSGPIDGKTGSDQFQRSFSHGLANLRVGSRKGSLVRVLRRAISKTITRGQNSIVAPIKPVKEPDWVFGSDKTRIHQIENNLTVNSLNFSSEGSLLDDDVSLESQNLQWAQGKAGEDRVHVVVSEEHGWLFVGIYDGFNGPDAPDYLLSHLYPAVHRELKGLLWDDPKTDAKSSDEADVENRDSSSEKKSKNWEESQRRWRCEWDRDLDRLLKDRSNGLDLDPDPNSSDVLKALSQALRKTEEAYLENADMMLDENPELALMGSCVLVMLMKGEDVYLMNVGDSRAVLGQKAESDYWIGKIKQDLERINEETMNDFDGCGDGEGASLVPTLSAFQLTVDHSTNVEEEVNRIRKEHPDDASAVSNERVKGSLKVTRAFGAGFLKQPKWNNALLEMFQIDYKGTSPYINCLPSLYHHRLGSKDQFLILSSDGLYQYFTNEEAVSEVELFITLQPEGDPAQHLVQELLFRAAKKAGMDFHELLEIPQGERRRYHDDVSIVVISLEGRMWKSCV.

Residues 11-30 form a disordered region; it reads CLTGGAGRNKKPELSILEPD. Ser-147 carries the phosphoserine modification. In terms of domain architecture, PPM-type phosphatase spans 243 to 645; sequence DVSLESQNLQ…DDVSIVVISL (403 aa). The Mn(2+) site is built by Asp-280 and Gly-281. The tract at residues 309-336 is disordered; it reads DDPKTDAKSSDEADVENRDSSSEKKSKN. Asp-573 and Asp-636 together coordinate Mn(2+).

The protein belongs to the PP2C family. The cofactor is Mg(2+). Requires Mn(2+) as cofactor. As to expression, expressed in seedlings, roots, leaves, stems, young inflorescences, flowers and siliques.

Its subcellular location is the nucleus. The catalysed reaction is O-phospho-L-seryl-[protein] + H2O = L-seryl-[protein] + phosphate. It catalyses the reaction O-phospho-L-threonyl-[protein] + H2O = L-threonyl-[protein] + phosphate. Functionally, involved in leaf development regulation. The protein is Probable protein phosphatase 2C 23 (PLL4) of Arabidopsis thaliana (Mouse-ear cress).